The sequence spans 673 residues: Methionine--tRNA ligase (673 aa).

Residues 13-23 (PYTNGFCHLGH) carry the 'HIGH' region motif. Residues C144, C147, C156, and C160 each contribute to the Zn(2+) site. Positions 325 to 329 (KFSKS) match the 'KMSKS' region motif. Position 328 (K328) interacts with ATP. The tRNA-binding domain occupies 575–673 (DVAKLDLRVG…KDVPEGTKVH (99 aa)).

The protein belongs to the class-I aminoacyl-tRNA synthetase family. MetG type 1 subfamily. Homodimer. Requires Zn(2+) as cofactor.

It is found in the cytoplasm. It carries out the reaction tRNA(Met) + L-methionine + ATP = L-methionyl-tRNA(Met) + AMP + diphosphate. Its function is as follows. Is required not only for elongation of protein synthesis but also for the initiation of all mRNA translation through initiator tRNA(fMet) aminoacylation. The sequence is that of Methionine--tRNA ligase from Methanocorpusculum labreanum (strain ATCC 43576 / DSM 4855 / Z).